A 62-amino-acid chain; its full sequence is Sec-independent protein translocase protein TatAc (62 aa).

Residues 8-28 (ILVILFVGFLVFGPDKLPALG) traverse the membrane as a helical segment.

The protein belongs to the TatA/E family. In terms of assembly, forms a complex with TatC.

The protein localises to the cell membrane. Part of the twin-arginine translocation (Tat) system that transports large folded proteins containing a characteristic twin-arginine motif in their signal peptide across membranes. TatA could form the protein-conducting channel of the Tat system. The sequence is that of Sec-independent protein translocase protein TatAc from Bacillus subtilis (strain 168).